The following is a 419-amino-acid chain: Farnesyl pyrophosphate synthase (419 aa).

Met1 is modified (N-acetylmethionine). 3 residues coordinate isopentenyl diphosphate: Lys123, Arg126, and Gln162. Lys123 is modified (N6-(2-hydroxyisobutyryl)lysine; alternate). Residue Lys123 is modified to N6-acetyllysine; alternate. Mg(2+)-binding residues include Asp169 and Asp173. Position 178 (Arg178) interacts with dimethylallyl diphosphate. Arg179 provides a ligand contact to isopentenyl diphosphate. The dimethylallyl diphosphate site is built by Lys266, Thr267, Gln306, Lys323, and Lys332. Position 353 is an N6-acetyllysine (Lys353).

Belongs to the FPP/GGPP synthase family. In terms of assembly, homodimer. Interacts with RSAD2. As to quaternary structure, (Microbial infection) Interacts with HTLV-1 protein p13(II). Mg(2+) serves as cofactor.

It localises to the cytoplasm. The enzyme catalyses isopentenyl diphosphate + dimethylallyl diphosphate = (2E)-geranyl diphosphate + diphosphate. It catalyses the reaction isopentenyl diphosphate + (2E)-geranyl diphosphate = (2E,6E)-farnesyl diphosphate + diphosphate. The protein operates within isoprenoid biosynthesis; farnesyl diphosphate biosynthesis; farnesyl diphosphate from geranyl diphosphate and isopentenyl diphosphate: step 1/1. It participates in isoprenoid biosynthesis; geranyl diphosphate biosynthesis; geranyl diphosphate from dimethylallyl diphosphate and isopentenyl diphosphate: step 1/1. With respect to regulation, inactivated by interferon-induced RSAD2. This inactivation may result of disruption of lipid rafts at the plasma membrane, and thus have an antiviral effect since many enveloped viruses need lipid rafts to bud efficiently out of the cell. Key enzyme in isoprenoid biosynthesis which catalyzes the formation of farnesyl diphosphate (FPP), a precursor for several classes of essential metabolites including sterols, dolichols, carotenoids, and ubiquinones. FPP also serves as substrate for protein farnesylation and geranylgeranylation. Catalyzes the sequential condensation of isopentenyl pyrophosphate with the allylic pyrophosphates, dimethylallyl pyrophosphate, and then with the resultant geranylpyrophosphate to the ultimate product farnesyl pyrophosphate. In Homo sapiens (Human), this protein is Farnesyl pyrophosphate synthase.